Reading from the N-terminus, the 231-residue chain is NADH-ubiquinone oxidoreductase chain 4 (231 aa).

6 helical membrane passes run 1–21 (PIAG…YGII), 34–54 (MFLP…LTCL), 63–85 (IAYS…TPWG), 89–111 (AMAL…NTTY), 128–148 (ILPM…ATPP), and 156–176 (LLIM…LGLS).

The protein belongs to the complex I subunit 4 family.

Its subcellular location is the mitochondrion membrane. The enzyme catalyses a ubiquinone + NADH + 5 H(+)(in) = a ubiquinol + NAD(+) + 4 H(+)(out). In terms of biological role, core subunit of the mitochondrial membrane respiratory chain NADH dehydrogenase (Complex I) that is believed to belong to the minimal assembly required for catalysis. Complex I functions in the transfer of electrons from NADH to the respiratory chain. The immediate electron acceptor for the enzyme is believed to be ubiquinone. The sequence is that of NADH-ubiquinone oxidoreductase chain 4 (MT-ND4) from Trimeresurus stejnegeri (Chinese green tree viper).